The chain runs to 398 residues: Bifunctional enzyme IspD/IspF (398 aa).

Residues 1–234 form a 2-C-methyl-D-erythritol 4-phosphate cytidylyltransferase region; the sequence is MSNSKRTAAI…SRLGALLGDI (234 aa). The tract at residues 235 to 398 is 2-C-methyl-D-erythritol 2,4-cyclodiphosphate synthase; that stretch reads RTGTGYDVHA…LPWGTNGLAD (164 aa). A divalent metal cation is bound by residues Asp-241 and His-243. Residues 241–243 and 267–268 contribute to the 4-CDP-2-C-methyl-D-erythritol 2-phosphate site; these read DVH and HS. Position 275 (His-275) interacts with a divalent metal cation. 4-CDP-2-C-methyl-D-erythritol 2-phosphate contacts are provided by residues 289 to 291, 365 to 368, Phe-372, and Arg-375; these read DIG and TTSE.

It in the N-terminal section; belongs to the IspD/TarI cytidylyltransferase family. IspD subfamily. In the C-terminal section; belongs to the IspF family. A divalent metal cation is required as a cofactor.

It catalyses the reaction 2-C-methyl-D-erythritol 4-phosphate + CTP + H(+) = 4-CDP-2-C-methyl-D-erythritol + diphosphate. It carries out the reaction 4-CDP-2-C-methyl-D-erythritol 2-phosphate = 2-C-methyl-D-erythritol 2,4-cyclic diphosphate + CMP. It functions in the pathway isoprenoid biosynthesis; isopentenyl diphosphate biosynthesis via DXP pathway; isopentenyl diphosphate from 1-deoxy-D-xylulose 5-phosphate: step 2/6. Its pathway is isoprenoid biosynthesis; isopentenyl diphosphate biosynthesis via DXP pathway; isopentenyl diphosphate from 1-deoxy-D-xylulose 5-phosphate: step 4/6. Its function is as follows. Bifunctional enzyme that catalyzes the formation of 4-diphosphocytidyl-2-C-methyl-D-erythritol from CTP and 2-C-methyl-D-erythritol 4-phosphate (MEP) (IspD), and catalyzes the conversion of 4-diphosphocytidyl-2-C-methyl-D-erythritol 2-phosphate (CDP-ME2P) to 2-C-methyl-D-erythritol 2,4-cyclodiphosphate (ME-CPP) with a corresponding release of cytidine 5-monophosphate (CMP) (IspF). The protein is Bifunctional enzyme IspD/IspF of Rhodopseudomonas palustris (strain BisB18).